Consider the following 166-residue polypeptide: HTH-type transcriptional regulator PrsX (166 aa).

The 135-residue stretch at 25-159 (EHLLMQLCIR…FEVINKKLLA (135 aa)) folds into the HTH marR-type domain.

It is found in the cytoplasm. The chain is HTH-type transcriptional regulator PrsX (prsX) from Escherichia coli O6:H1 (strain CFT073 / ATCC 700928 / UPEC).